A 224-amino-acid chain; its full sequence is 2-C-methyl-D-erythritol 4-phosphate cytidylyltransferase (224 aa).

Belongs to the IspD/TarI cytidylyltransferase family. IspD subfamily.

It carries out the reaction 2-C-methyl-D-erythritol 4-phosphate + CTP + H(+) = 4-CDP-2-C-methyl-D-erythritol + diphosphate. Its pathway is isoprenoid biosynthesis; isopentenyl diphosphate biosynthesis via DXP pathway; isopentenyl diphosphate from 1-deoxy-D-xylulose 5-phosphate: step 2/6. Functionally, catalyzes the formation of 4-diphosphocytidyl-2-C-methyl-D-erythritol from CTP and 2-C-methyl-D-erythritol 4-phosphate (MEP). This chain is 2-C-methyl-D-erythritol 4-phosphate cytidylyltransferase, found in Caldicellulosiruptor bescii (strain ATCC BAA-1888 / DSM 6725 / KCTC 15123 / Z-1320) (Anaerocellum thermophilum).